A 498-amino-acid polypeptide reads, in one-letter code: ATP synthase subunit alpha, chloroplastic (498 aa).

170 to 177 is an ATP binding site; that stretch reads GDRQTGKT.

This sequence belongs to the ATPase alpha/beta chains family. As to quaternary structure, F-type ATPases have 2 components, CF(1) - the catalytic core - and CF(0) - the membrane proton channel. CF(1) has five subunits: alpha(3), beta(3), gamma(1), delta(1), epsilon(1). CF(0) has four main subunits: a, b, b' and c.

The protein resides in the plastid. The protein localises to the chloroplast thylakoid membrane. The catalysed reaction is ATP + H2O + 4 H(+)(in) = ADP + phosphate + 5 H(+)(out). In terms of biological role, produces ATP from ADP in the presence of a proton gradient across the membrane. The alpha chain is a regulatory subunit. The chain is ATP synthase subunit alpha, chloroplastic from Oltmannsiellopsis viridis (Marine flagellate).